A 410-amino-acid chain; its full sequence is Translation initiation factor 2 subunit gamma (410 aa).

The tr-type G domain occupies 6–203 (QSEINIGMVG…AIEDLMPTPE (198 aa)). Residues 15–22 (GHVDHGKT) are G1. Mg(2+) contacts are provided by Asp18, Thr22, Gly43, and Ser45. 18-23 (DHGKTS) is a binding site for GTP. The interval 43–47 (GISIR) is G2. Zn(2+)-binding residues include Cys58, Cys61, Cys73, and Cys76. The segment at 90–93 (DAPG) is G3. Residues 146-149 (NKID) and 181-183 (SAH) each bind GTP. A G4 region spans residues 146–149 (NKID). Residues 181-183 (SAH) are G5.

This sequence belongs to the TRAFAC class translation factor GTPase superfamily. Classic translation factor GTPase family. EIF2G subfamily. Heterotrimer composed of an alpha, a beta and a gamma chain. Mg(2+) serves as cofactor.

It catalyses the reaction GTP + H2O = GDP + phosphate + H(+). In terms of biological role, eIF-2 functions in the early steps of protein synthesis by forming a ternary complex with GTP and initiator tRNA. The sequence is that of Translation initiation factor 2 subunit gamma from Methanococcus aeolicus (strain ATCC BAA-1280 / DSM 17508 / OCM 812 / Nankai-3).